The following is a 570-amino-acid chain: Auxin efflux carrier component 6 (570 aa).

Residues 1–6 (MITGNE) lie on the Extracellular side of the membrane. Residues 7–27 (FYTVMCAMAPLYFAMFVAYGS) traverse the membrane as a helical segment. Topologically, residues 28 to 38 (VKWCKIFTPAQ) are cytoplasmic. A helical membrane pass occupies residues 39-59 (CSGINRFVSVFAVPVLSFHFI). Residue Val-51 coordinates (indol-3-yl)acetate. Residues 60 to 70 (SQNNPYKMDTM) lie on the Extracellular side of the membrane. A helical membrane pass occupies residues 71-91 (FILADTLSKIFVFVLLSLWAV). Residues 92 to 100 (FFKAGGLDW) lie on the Cytoplasmic side of the membrane. Residues 101–121 (LITLFSIATLPNTLVMGIPLL) form a helical membrane-spanning segment. Residues Asn-112 and Leu-114 each coordinate (indol-3-yl)acetate. Over 122–131 (QAMYGDYTQT) the chain is Extracellular. A helical transmembrane segment spans residues 132–152 (LMVQLVVLQCIIWYTLLLFLF). Position 145 (Tyr-145) interacts with (indol-3-yl)acetate. Over 153 to 430 (ELRAARLLIR…LSRNPNTYSS (278 aa)) the chain is Cytoplasmic. Phosphoserine is present on residues Ser-230 and Ser-308. The helical transmembrane segment at 431-451 (LLGLVWSLISFKWNIPMPNIV) threads the bilayer. At 452–454 (DFS) the chain is on the extracellular side. The chain crosses the membrane as a helical span at residues 455–475 (IKIISDAGLGMAMFSLGLFMA). Over 476 to 491 (LQPKMIPCGAKKATMG) the chain is Cytoplasmic. A helical membrane pass occupies residues 492 to 512 (MLIRFISGPLFMAGASLLVGL). Residues 513-515 (RGS) lie on the Extracellular side of the membrane. The chain crosses the membrane as a helical span at residues 516–536 (RLHAAIVQAALPQGIVPFVFA). Residues Ile-530 and Val-531 each contribute to the (indol-3-yl)acetate site. Residues 537–549 (REYNLHPDLLSTL) are Cytoplasmic-facing. A helical transmembrane segment spans residues 550 to 570 (VIFGMIVSLPVTILYYVLLGL).

The protein belongs to the auxin efflux carrier (TC 2.A.69.1) family. Homodimer. Expressed in the vasculature of the primary root, cotyledons, floral stem, sepals and the main transmitting tract of the reproductive silique. Expressed in embryos, shoot meristem, root tip and lateral root meristems. Expressed in the nectaries and the floral organ boundaries of the anthers. Detected in pollen. Expressed in broad subepidermal domains that narrowed to sites of vein formation. Expressed in veins of mature leaves.

It is found in the endoplasmic reticulum membrane. Its function is as follows. Component of the intracellular auxin-transport pathway. Regulates auxin transport and auxin homeostasis. Directly involved in the regulation of nectar production. Involved in unfolded protein response (UPR) activation. Involved in the control of vein patterning. Redundantly with PIN8, inhibits the vein-formation-promoting functions of PIN5. PIN5, PIN6, and PIN8 control vein network geometry, but they are expressed in mutually exclusive domains of leaf vascular cells. In Arabidopsis thaliana (Mouse-ear cress), this protein is Auxin efflux carrier component 6.